The primary structure comprises 228 residues: Ephrin-A5b (228 aa).

The signal sequence occupies residues methionine 1–serine 20. In terms of domain architecture, Ephrin RBD spans alanine 29–asparagine 162. Asparagine 37 carries an N-linked (GlcNAc...) asparagine glycan. Intrachain disulfides connect cysteine 62–cysteine 102 and cysteine 90–cysteine 151. Over residues leucine 184 to arginine 198 the composition is skewed to basic and acidic residues. The disordered stretch occupies residues leucine 184 to glycine 205. The GPI-anchor amidated serine moiety is linked to residue serine 204. Positions glycine 205–leucine 228 are cleaved as a propeptide — removed in mature form.

It belongs to the ephrin family. In terms of tissue distribution, widespread expression in the embryo.

The protein localises to the cell membrane. Cell surface GPI-bound ligand for Eph receptors, a family of receptor tyrosine kinases which are crucial for migration, repulsion and adhesion during neuronal, vascular and epithelial development. Binds promiscuously Eph receptors residing on adjacent cells, leading to contact-dependent bidirectional signaling into neighboring cells. Induces compartmentalized signaling within a caveolae-like membrane microdomain when bound to the extracellular domain of its cognate receptor. This signaling event requires the activity of the Fyn tyrosine kinase. Activates the epha3 receptor to regulate cell-cell adhesion and cytoskeletal organization. With the receptor epha2 may regulate lens fiber cells shape and interactions and be important for lens transparency maintenance. May function actively to stimulate axon fasciculation. Controls axon growth and may be involved in the creation of the retino-tectal map. The protein is Ephrin-A5b (efna5b) of Danio rerio (Zebrafish).